Here is a 212-residue protein sequence, read N- to C-terminus: MIFDKTMLARYFIMGTQDVADEAEFLRILNQALRSGITLFQYREKGQGALVGQKKLQLAKQVRALTAQYHVPLVIDDDMALAHAIAADGIHFGQDDGRPVDNIKQSGNLFVGVSVSNQQEYQRIAHVAGIDHIGVGPIFATTSKSDAKPPIGISGLSQLIRIAHHPIVAIGGIQRDNLSKVLSTGVDGAAVISMISQSGDIQKTLADWRNRT.

Residues 41–45 (QYREK) and D76 each bind 4-amino-2-methyl-5-(diphosphooxymethyl)pyrimidine. Mg(2+)-binding residues include D77 and D96. Residue S114 coordinates 4-amino-2-methyl-5-(diphosphooxymethyl)pyrimidine. 141-143 (TTS) contributes to the 2-[(2R,5Z)-2-carboxy-4-methylthiazol-5(2H)-ylidene]ethyl phosphate binding site. A 4-amino-2-methyl-5-(diphosphooxymethyl)pyrimidine-binding site is contributed by K144. Residues G172 and 192-193 (IS) each bind 2-[(2R,5Z)-2-carboxy-4-methylthiazol-5(2H)-ylidene]ethyl phosphate.

The protein belongs to the thiamine-phosphate synthase family. Mg(2+) is required as a cofactor.

It carries out the reaction 2-[(2R,5Z)-2-carboxy-4-methylthiazol-5(2H)-ylidene]ethyl phosphate + 4-amino-2-methyl-5-(diphosphooxymethyl)pyrimidine + 2 H(+) = thiamine phosphate + CO2 + diphosphate. The enzyme catalyses 2-(2-carboxy-4-methylthiazol-5-yl)ethyl phosphate + 4-amino-2-methyl-5-(diphosphooxymethyl)pyrimidine + 2 H(+) = thiamine phosphate + CO2 + diphosphate. The catalysed reaction is 4-methyl-5-(2-phosphooxyethyl)-thiazole + 4-amino-2-methyl-5-(diphosphooxymethyl)pyrimidine + H(+) = thiamine phosphate + diphosphate. It functions in the pathway cofactor biosynthesis; thiamine diphosphate biosynthesis; thiamine phosphate from 4-amino-2-methyl-5-diphosphomethylpyrimidine and 4-methyl-5-(2-phosphoethyl)-thiazole: step 1/1. Its function is as follows. Condenses 4-methyl-5-(beta-hydroxyethyl)thiazole monophosphate (THZ-P) and 2-methyl-4-amino-5-hydroxymethyl pyrimidine pyrophosphate (HMP-PP) to form thiamine monophosphate (TMP). This is Thiamine-phosphate synthase from Leuconostoc citreum (strain KM20).